The following is a 302-amino-acid chain: Enoyl-CoA delta isomerase 1, mitochondrial (302 aa).

The N-terminal 41 residues, 1 to 41, are a transit peptide targeting the mitochondrion; it reads MALVASVRVPARVLLRAGARLPGAALGRTERAAGGGDGARR. K61 is modified (N6-acetyllysine; alternate). K61 is subject to N6-succinyllysine; alternate. K84 carries the post-translational modification N6-succinyllysine. K89 is subject to N6-acetyllysine. Residues 106 to 110, G153, and N177 each bind substrate; that span reads AGLDL. K283 is modified (N6-acetyllysine; alternate). K283 carries the N6-succinyllysine; alternate modification. N6-succinyllysine is present on K288.

This sequence belongs to the enoyl-CoA hydratase/isomerase family. In terms of assembly, homotrimer. As to expression, expressed in liver (at protein level).

Its subcellular location is the mitochondrion matrix. The enzyme catalyses a (3Z)-enoyl-CoA = a 4-saturated (2E)-enoyl-CoA. The catalysed reaction is a (3E)-enoyl-CoA = a 4-saturated (2E)-enoyl-CoA. It carries out the reaction (3Z)-octenoyl-CoA = (2E)-octenoyl-CoA. It catalyses the reaction (2E)-tetradecenoyl-CoA = (3Z)-tetradecenoyl-CoA. The enzyme catalyses (3Z)-dodecenoyl-CoA = (2E)-dodecenoyl-CoA. The catalysed reaction is (3Z)-hexenoyl-CoA = (2E)-hexenoyl-CoA. It carries out the reaction (3Z)-decenoyl-CoA = (2E)-decenoyl-CoA. It participates in lipid metabolism; fatty acid beta-oxidation. Its function is as follows. Key enzyme of fatty acid beta-oxidation. Able to isomerize both 3-cis (3Z) and 3-trans (3E) double bonds into the 2-trans (2E) form in a range of enoyl-CoA species, with a preference for (3Z)-enoyl-CoAs over (3E)-enoyl-CoAs. The catalytic efficiency of this enzyme is not affected by the fatty acyl chain length. The polypeptide is Enoyl-CoA delta isomerase 1, mitochondrial (ECI1) (Homo sapiens (Human)).